We begin with the raw amino-acid sequence, 256 residues long: 7-cyano-7-deazaguanine synthase (256 aa).

The disordered stretch occupies residues 1-22 (MTDASADALTSPSNSGASQDTS). Residues 8–22 (ALTSPSNSGASQDTS) show a composition bias toward polar residues. Position 30–40 (30–40 (LSGGLDSVTCL)) interacts with ATP. The Zn(2+) site is built by Cys220, Cys230, Cys233, and Cys236.

The protein belongs to the QueC family. Requires Zn(2+) as cofactor.

The catalysed reaction is 7-carboxy-7-deazaguanine + NH4(+) + ATP = 7-cyano-7-deazaguanine + ADP + phosphate + H2O + H(+). Its pathway is purine metabolism; 7-cyano-7-deazaguanine biosynthesis. Its function is as follows. Catalyzes the ATP-dependent conversion of 7-carboxy-7-deazaguanine (CDG) to 7-cyano-7-deazaguanine (preQ(0)). This chain is 7-cyano-7-deazaguanine synthase, found in Psychrobacter sp. (strain PRwf-1).